Reading from the N-terminus, the 2161-residue chain is Voltage-dependent L-type calcium channel subunit alpha-1D (2161 aa).

3 disordered regions span residues 1 to 21, 30 to 49, and 64 to 100; these read MMMM…ADHA, TRLP…SKQT, and KAAQ…SSNS. The Cytoplasmic segment spans residues 1 to 126; that stretch reads MMMMMMMKKM…RACISIVEWK (126 aa). The segment covering 38–49 has biased composition (polar residues); the sequence is GPTSQPNSSKQT. The segment covering 82 to 93 has biased composition (basic residues); the sequence is QRKRQQYAKSKK. Residues 113-409 form an I repeat; it reads NPIRRACISI…LVLGVLSGEF (297 aa). Residues 127–145 traverse the membrane as a helical segment; it reads PFDIFILLAIFANCVALAI. The Extracellular segment spans residues 146-163; it reads YIPFPEDDSNSTNHNLEK. N-linked (GlcNAc...) asparagine glycosylation occurs at Asn-155. The helical transmembrane segment at 164-183 threads the bilayer; the sequence is VEYAFLIIFTVETFLKIIAY. Residues 184 to 195 lie on the Cytoplasmic side of the membrane; it reads GLLLHPNAYVRN. Residues 196-214 traverse the membrane as a helical segment; it reads GWNLLDFVIVIVGLFSVIL. The Extracellular segment spans residues 215 to 235; it reads EQLTKETEGGNHSSGKSGGFD. Asn-225 carries an N-linked (GlcNAc...) asparagine glycan. The helical transmembrane segment at 236–254 threads the bilayer; that stretch reads VKALRAFRVLRPLRLVSGV. The Cytoplasmic portion of the chain corresponds to 255–273; the sequence is PSLQVVLNSIIKAMVPLLH. Residues 274-293 form a helical membrane-spanning segment; the sequence is IALLVLFVIIIYAIIGLELF. At 294-381 the chain is on the extracellular side; sequence IGKMHKTCFF…WMNDAMGFEL (88 aa). An N-linked (GlcNAc...) asparagine glycan is attached at Asn-329. Residue Glu-364 coordinates Ca(2+). Residues 382–406 form a helical membrane-spanning segment; that stretch reads PWVYFVSLVIFGSFFVLNLVLGVLS. The Cytoplasmic segment spans residues 407–523; the sequence is GEFSKEREKA…RRCRAAVKSV (117 aa). The segment at 429 to 446 is binding to the beta subunit; that stretch reads QQLEEDLKGYLDWITQAE. The segment at 449–482 is disordered; it reads DPENEEEGGEEGKRNTSMPTSETESVNTENVSGE. The span at 463 to 479 shows a compositional bias: polar residues; sequence NTSMPTSETESVNTENV. Residues 509–755 form an II repeat; it reads NRFNRRRCRA…VFLAIAVDNL (247 aa). A helical transmembrane segment spans residues 524-543; sequence TFYWLVIVLVFLNTLTISSE. Topologically, residues 544 to 558 are extracellular; that stretch reads HYNQPDWLTQIQDIA. Residues 559-577 traverse the membrane as a helical segment; sequence NKVLLALFTCEMLVKMYSL. Residues 578-585 are Cytoplasmic-facing; the sequence is GLQAYFVS. Residues 586–604 traverse the membrane as a helical segment; that stretch reads LFNRFDCFVVCGGITETIL. At 605–614 the chain is on the extracellular side; the sequence is VELEIMSPLG. Residues 615 to 633 traverse the membrane as a helical segment; the sequence is ISVFRCVRLLRIFKVTRHW. Residues 634-652 lie on the Cytoplasmic side of the membrane; that stretch reads TSLSNLVASLLNSMKSIAS. A helical membrane pass occupies residues 653–673; sequence LLLLLFLFIIIFSLLGMQLFG. Residues 674-727 are Extracellular-facing; it reads GKFNFDETQTKRSTFDNFPQALLTVFQILTGEDWNAVMYDGIMAYGGPSSSGMI. Residue Glu-705 coordinates Ca(2+). The helical transmembrane segment at 728-752 threads the bilayer; sequence VCIYFIILFICGNYILLNVFLAIAV. Residues 753 to 886 lie on the Cytoplasmic side of the membrane; the sequence is DNLADAESLN…VGCHKLINHH (134 aa). Basic and acidic residues predominate over residues 766-790; that stretch reads KEEAEEKERKKIARKESLENKKNNK. Residues 766–850 form a disordered region; the sequence is KEEAEEKERK…AGPRPRRISE (85 aa). Positions 791-802 are enriched in polar residues; it reads PEVNQIANSDNK. Residues 825-838 are compositionally biased toward acidic residues; that stretch reads VGEEEEEEEEDEPE. The III repeat unit spans residues 873-1155; sequence NPIRVGCHKL…IFVGFVIVTF (283 aa). Residues 887–905 form a helical membrane-spanning segment; that stretch reads IFTNLILVFIMLSSAALAA. The Extracellular portion of the chain corresponds to 906 to 921; it reads EDPIRSHSFRNTILGY. Residues 922–941 traverse the membrane as a helical segment; that stretch reads FDYAFTAIFTVEILLKMTTF. Topologically, residues 942 to 953 are cytoplasmic; that stretch reads GAFLHKGAFCRN. Residues 954 to 972 traverse the membrane as a helical segment; the sequence is YFNLLDMLVVGVSLVSFGI. Residues 973–978 are Extracellular-facing; it reads QSSAIS. A helical membrane pass occupies residues 979–998; it reads VVKILRVLRVLRPLRAINRA. Over 999 to 1017 the chain is Cytoplasmic; that stretch reads KGLKHVVQCVFVAIRTIGN. A helical transmembrane segment spans residues 1018–1037; it reads IMIVTTLLQFMFACIGVQLF. Over 1038 to 1127 the chain is Extracellular; sequence KGKFYRCTDE…IGPIYNHRVE (90 aa). Positions 1075 to 1165 are dihydropyridine binding; the sequence is RIWQNSDFNF…QEQGEKEYKN (91 aa). Glu-1101 serves as a coordination point for Ca(2+). The helical transmembrane segment at 1128-1148 threads the bilayer; sequence ISIFFIIYIIIVAFFMMNIFV. The Cytoplasmic portion of the chain corresponds to 1149–1205; sequence GFVIVTFQEQGEKEYKNCELDKNQRQCVEYALKARPLRRYIPKNPYQYKFWYVVNSS. An IV repeat occupies 1192 to 1467; the sequence is NPYQYKFWYV…LFVAVIMDNF (276 aa). The helical transmembrane segment at 1206–1224 threads the bilayer; sequence PFEYMMFVLIMLNTLCLAM. Over 1225–1239 the chain is Extracellular; the sequence is QHYEQSKMFNDAMDI. A helical membrane pass occupies residues 1240 to 1259; it reads LNMVFTGVFTVEMVLKVIAF. Residues 1260–1266 are Cytoplasmic-facing; sequence KPKGYFS. A helical transmembrane segment spans residues 1267–1288; it reads DAWNTFDSLIVIGSIIDVALSE. Residues 1289–1313 are Extracellular-facing; that stretch reads ADPTESENVPVPTATPGNSEESNRI. Residues 1314–1333 traverse the membrane as a helical segment; that stretch reads SITFFRLFRVMRLVKLLSRG. Topologically, residues 1334-1352 are cytoplasmic; that stretch reads EGIRTLLWTFIKSFQALPY. Residues 1353 to 1372 traverse the membrane as a helical segment; the sequence is VALLIAMLFFIYAVIGMQMF. The Extracellular segment spans residues 1373-1439; sequence GKVAMRDNNQ…GEEYTCGSNF (67 aa). Residues 1420 to 1486 are dihydropyridine binding; sequence LCDPESDYNP…LGPHHLDEFK (67 aa). Residues 1432–1475 are phenylalkylamine binding; that stretch reads EYTCGSNFAIVYFISFYMLCAFLIINLFVAVIMDNFDYLTRDWS. A helical transmembrane segment spans residues 1440-1464; that stretch reads AIVYFISFYMLCAFLIINLFVAVIM. Residues 1465–2161 lie on the Cytoplasmic side of the membrane; that stretch reads DNFDYLTRDW…ADEMICITTL (697 aa). Disordered stretches follow at residues 1659–1678, 1684–1804, 1872–1919, and 2108–2152; these read SCDL…EDDV, ALLG…VKRT, PGRN…ASHR, and NGNV…EDLA. Residues 1745-1763 are compositionally biased toward polar residues; sequence SIGKQVPTSTNANLNNANM. Positions 1779–1797 are enriched in basic and acidic residues; sequence HVSENGHHSSHKHDREPQR. A compositionally biased stretch (acidic residues) spans 2138-2152; sequence SDEEPDPGRDEEDLA.

This sequence belongs to the calcium channel alpha-1 subunit (TC 1.A.1.11) family. CACNA1D subfamily. Voltage-dependent calcium channels are multisubunit complexes, consisting of alpha-1, alpha-2, beta and delta subunits in a 1:1:1:1 ratio. The channel activity is directed by the pore-forming and voltage-sensitive alpha-1 subunit. In many cases, this subunit is sufficient to generate voltage-sensitive calcium channel activity. The auxiliary subunits beta and alpha-2/delta linked by a disulfide bridge regulate the channel activity. Channel activity is further modulated, depending on the presence of specific delta subunit isoforms. Interacts (via IQ domain) with CABP1 and CABP4 in a calcium independent manner. Interacts with RIMBP2. As to expression, expressed in pancreatic islets and in brain, where it has been seen in cerebral cortex, hippocampus, basal ganglia, habenula and thalamus. Expressed in the small cell lung carcinoma cell line SCC-9. No expression in skeletal muscle.

The protein localises to the membrane. It catalyses the reaction Ca(2+)(in) = Ca(2+)(out). Its function is as follows. Voltage-sensitive calcium channels (VSCC) mediate the entry of calcium ions into excitable cells and are also involved in a variety of calcium-dependent processes, including muscle contraction, hormone or neurotransmitter release, gene expression, cell motility, cell division and cell death. The isoform alpha-1D gives rise to L-type calcium currents. Long-lasting (L-type) calcium channels belong to the 'high-voltage activated' (HVA) group. They are blocked by dihydropyridines (DHP), phenylalkylamines, and by benzothiazepines. Functionally, voltage-sensitive calcium channels (VSCC) mediate the entry of calcium ions into excitable cells and are also involved in a variety of calcium-dependent processes, including muscle contraction, hormone or neurotransmitter release, gene expression, cell motility, cell division and cell death. The isoform alpha-1D gives rise to L-type calcium currents. The chain is Voltage-dependent L-type calcium channel subunit alpha-1D (CACNA1D) from Homo sapiens (Human).